The sequence spans 98 residues: NADH-ubiquinone oxidoreductase chain 4L (98 aa).

Transmembrane regions (helical) follow at residues 1 to 21 (MPSI…GMLI), 29 to 49 (SLLC…LTAL), and 61 to 81 (IVLL…LVMV).

This sequence belongs to the complex I subunit 4L family. Core subunit of respiratory chain NADH dehydrogenase (Complex I) which is composed of 45 different subunits.

The protein localises to the mitochondrion inner membrane. It catalyses the reaction a ubiquinone + NADH + 5 H(+)(in) = a ubiquinol + NAD(+) + 4 H(+)(out). Its function is as follows. Core subunit of the mitochondrial membrane respiratory chain NADH dehydrogenase (Complex I) which catalyzes electron transfer from NADH through the respiratory chain, using ubiquinone as an electron acceptor. Part of the enzyme membrane arm which is embedded in the lipid bilayer and involved in proton translocation. The chain is NADH-ubiquinone oxidoreductase chain 4L (MT-ND4L) from Lepus europaeus (European hare).